Reading from the N-terminus, the 316-residue chain is Secondary metabolism regulator laeA (316 aa).

Belongs to the methyltransferase superfamily. LaeA methyltransferase family. Component of the heterotrimeric velvet complex composed of laeA, ve1 and velB; Ve1 acting as a bridging protein between laeA and velB. Interacts directly with veA.

It is found in the nucleus. The protein localises to the cytoplasm. It catalyses the reaction L-methionyl-[protein] + S-adenosyl-L-methionine = S-methyl-L-methionyl-[protein] + S-adenosyl-L-homocysteine. Methyltransferase that performs automethylation. No other methyl-accepting substrate has been identified yet. Component of the velvet transcription factor complex that acts as a global regulator for secondary metabolite gene expression. Controls the expression of the mycotoxins trichothecenes and zearalenon gene clusters. Negatively controls perithecial induction, but positively controls virulence toward the host plant. The sequence is that of Secondary metabolism regulator laeA from Gibberella zeae (strain ATCC MYA-4620 / CBS 123657 / FGSC 9075 / NRRL 31084 / PH-1) (Wheat head blight fungus).